Reading from the N-terminus, the 880-residue chain is MDALTPRDSPKRDDSMATSAATAASAKPDALTIGKEGIVHGHIHNYNNLTYIHGHLHHSAPVNDSSASATPAAAAVADAATSAFASGASHDMGGDCHVNEKCKEYTDCQHFEFLNYHNNPSLTKYNDTATYNSNNHSFANNFHSVASDPTSPQQNSKSDLPRRKDSWFNDDLILLPSSKKNKPNPPPGSDDCYCTPKILEICCDETHPKSEANIKQGESDQPTKKDISENGNDVAIFTDVKNDHLMPNFNLHDQYCNSTNHDSHNHNNTVPDSFSQLMSHLSEIDCDLTCDTPCTASTSATSGHKFVQDHQSSNNDDVFHKYCKFCEESTDNQPCSKHMHLESKPPQLPPKCSSLRKPTNTLQGTNHAYHEHILNTDMDLKILEDLCNISSLYEVPFGKHINHHDHNNAGNGCDGSSTGNNENGNQTMNLLLSSINRCNPKNNLNGSNNNTAGATSTDHQHHHHRIQFHSHKPNRNNIVNNSGISAANTTADLTNNDLNDLISREYSYERFRNQSEPPSLPKVTHQNQKNRRSWPTKDLESTDFSSLEDSLPSSISPPIQTTSTINFNWCFKEEKNNDLKCKWKECPESCSSLFDLQRHLLKDHVSQDFKHPMEPLACNWEDCDFLGDDTCSIVNHINCQHGINFDIQFANPDSFLPGSISKEKHHLLHCPNPQTHEVSKADGAPDMTSANDVSNIPPIKQPEQVICQWDGCNKSFSSAQELNDHLEAVHLTRGKSEYQCLWHDCHRTFPQRQKLIRHLKVHSKYKPYKCKTCKRCFSSEETLVQHTRTHSGEKPYKCHICNKKFAISSSLKIHIRTHTGEKPLQCKICGKRFNESSNLSKHIKTHQKKYKCSDCSKSFDDLGKLNSQKVKCALERKPYL.

Disordered stretches follow at residues 1 to 26 (MDAL…AASA) and 140 to 164 (NNFH…PRRK). Over residues 17 to 26 (ATSAATAASA) the composition is skewed to low complexity. Polar residues predominate over residues 147–158 (SDPTSPQQNSKS). A phosphoserine mark is found at serine 156 and serine 166. The zinc-responsive domain 1 (ZRD(AD1)) stretch occupies residues 182 to 502 (KPNPPPGSDD…LTNNDLNDLI (321 aa)). The transcription activation domain 1 (AD1) stretch occupies residues 207 to 402 (HPKSEANIKQ…YEVPFGKHIN (196 aa)). Disordered stretches follow at residues 436 to 482 (NRCN…VNNS) and 510 to 555 (RFRN…PSSI). Low complexity predominate over residues 442 to 456 (NNLNGSNNNTAGATS). Basic residues predominate over residues 460-474 (QHHHHRIQFHSHKPN). Serine 515 is modified (phosphoserine). Over residues 545–555 (SSLEDSLPSSI) the composition is skewed to low complexity. The C2H2-type 1 zinc finger occupies 579–604 (LKCKWKECPESCSSLFDLQRHLLKDH). The zinc-responsive domain 2 (ZRD(AD2)) stretch occupies residues 579 to 641 (LKCKWKECPE…SIVNHINCQH (63 aa)). The Zn(2+) site is built by cysteine 581, cysteine 586, histidine 599, histidine 604, cysteine 618, cysteine 623, histidine 636, and histidine 641. Positions 611-640 (HPMEPLACNWEDCDFLGDDTCSIVNHINCQ) are transcription activation domain 2 (AD2). A C2H2-type 2; atypical zinc finger spans residues 616-641 (LACNWEDCDFLGDDTCSIVNHINCQH). C2H2-type zinc fingers lie at residues 705–730 (VICQ…EAVH), 738–762 (YQCL…LKVH), 768–790 (YKCK…TRTH), 796–818 (YKCH…IRTH), and 824–846 (LQCK…IKTH). Residues 705–846 (VICQWDGCNK…SNLSKHIKTH (142 aa)) constitute a DNA-binding region (DNA-binding domain).

It localises to the nucleus. With respect to regulation, active in zinc-limited cells and repressed in replete cells. Zinc controls ZAP1 DNA binding activity. In terms of biological role, transcription regulator controlling zinc-responsive gene expression. Binds to zinc-responsive elements (ZREs) (consensus sequence 5'-ACCYYNAAGGT-3') in the promoter of target genes. Recruits SWI/SNF, SAGA, and Mediator complexes as coactivators in a zinc-responsive manner. Involved in zinc ion homeostasis by zinc-responsive transcriptional regulation of the zinc uptake system genes ZTR1 and ZTR2. Positively regulates ETR1 expression, affecting mitochondrial function. This Saccharomyces cerevisiae (strain ATCC 204508 / S288c) (Baker's yeast) protein is Zinc-responsive transcriptional regulator ZAP1 (ZAP1).